The chain runs to 443 residues: MSTSDSIVSSQTKQSSWRKSDTTWTLGLFGTAIGAGVLFFPIRAGFGGLIPILLMLVLAYPIAFYCHRALARLCLSGSNPSGNITETVEEHFGKTGGVVITFLYFFAICPLLWIYGVTITNTFMTFWENQLGFAPLNRGFVALFLLLLMAFVIWFGKDLMVKVMSYLVWPFIASLVLISLSLIPYWNSAVIDQVDLGSLSLTGHDGILITVWLGISIMVFSFNFSPIVSSFVVSKREEYEKDFGRDFTERKCSQIISRASMLMVAVVMFFAFSCLFTLSPANMAEAKAQNIPVLSYLANHFASMTGTKTTLAITLEYAASIIALVAIFKSFFGHYLGTLEGLNGLILKFGYKGDKTKVSLGKLNTISMIFIMGSTWVVAYANPNILDLIEAMGAPIIASLLCLLPMYAIRKAPSLAKYRGRLDNVFVTVIGLLTILNIVYKLF.

Transmembrane regions (helical) follow at residues 22 to 42, 44 to 64, 97 to 117, 140 to 160, 163 to 183, 207 to 227, 261 to 281, 312 to 332, 366 to 386, 389 to 409, and 423 to 443; these read TTWT…FFPI, AGFG…PIAF, GVVI…IYGV, FVAL…KDLM, VMSY…LSLI, ILIT…FSPI, MLMV…LSPA, AITL…KSFF, ISMI…PNIL, IEAM…MYAI, and DNVF…YKLF.

Belongs to the amino acid/polyamine transporter 2 family. SdaC/TdcC subfamily.

Its subcellular location is the cell inner membrane. The catalysed reaction is L-threonine(in) + H(+)(in) = L-threonine(out) + H(+)(out). The enzyme catalyses L-serine(in) + H(+)(in) = L-serine(out) + H(+)(out). In terms of biological role, involved in the import of threonine and serine into the cell, with the concomitant import of a proton (symport system). This Escherichia coli O45:K1 (strain S88 / ExPEC) protein is Threonine/serine transporter TdcC.